The sequence spans 455 residues: Phosphoglucosamine mutase (455 aa).

The Phosphoserine intermediate role is filled by serine 108. Residues serine 108, aspartate 246, aspartate 248, and aspartate 250 each contribute to the Mg(2+) site. Phosphoserine is present on serine 108.

This sequence belongs to the phosphohexose mutase family. Mg(2+) serves as cofactor. Post-translationally, activated by phosphorylation.

It carries out the reaction alpha-D-glucosamine 1-phosphate = D-glucosamine 6-phosphate. Catalyzes the conversion of glucosamine-6-phosphate to glucosamine-1-phosphate. This Frankia casuarinae (strain DSM 45818 / CECT 9043 / HFP020203 / CcI3) protein is Phosphoglucosamine mutase.